The following is a 616-amino-acid chain: Chaperone protein HscA (616 aa).

Belongs to the heat shock protein 70 family.

In terms of biological role, chaperone involved in the maturation of iron-sulfur cluster-containing proteins. Has a low intrinsic ATPase activity which is markedly stimulated by HscB. Involved in the maturation of IscU. This is Chaperone protein HscA from Salmonella paratyphi C (strain RKS4594).